Reading from the N-terminus, the 210-residue chain is Transcriptional regulator MxiE (210 aa).

The region spanning 99 to 199 (YHLVLYLLRT…GFSARELSNI (101 aa)) is the HTH araC/xylS-type domain. 2 consecutive DNA-binding regions (H-T-H motif) follow at residues 118 to 139 (KSLT…RKAL) and 166 to 189 (ITSA…KTRL).

Its function is as follows. Necessary for the secretion of ipa invasins. Probable transcriptional regulatory protein. The protein is Transcriptional regulator MxiE (mxiE) of Shigella flexneri.